We begin with the raw amino-acid sequence, 90 residues long: Auxin-responsive protein SAUR23 (90 aa).

The protein belongs to the ARG7 family.

The protein localises to the cell membrane. Functions as a positive effector of cell expansion through modulation of auxin transport. The protein is Auxin-responsive protein SAUR23 of Arabidopsis thaliana (Mouse-ear cress).